The chain runs to 547 residues: Chaperonin GroEL (547 aa).

Residues 30–33 (TLGP), Lys-51, 87–91 (DGTTT), Gly-415, and Asp-496 contribute to the ATP site. Residues 527–547 (KKDSPAMPGGGGMGGMGGMDF) form a disordered region. The segment covering 534–547 (PGGGGMGGMGGMDF) has biased composition (gly residues).

This sequence belongs to the chaperonin (HSP60) family. In terms of assembly, forms a cylinder of 14 subunits composed of two heptameric rings stacked back-to-back. Interacts with the co-chaperonin GroES.

It localises to the cytoplasm. The enzyme catalyses ATP + H2O + a folded polypeptide = ADP + phosphate + an unfolded polypeptide.. Functionally, together with its co-chaperonin GroES, plays an essential role in assisting protein folding. The GroEL-GroES system forms a nano-cage that allows encapsulation of the non-native substrate proteins and provides a physical environment optimized to promote and accelerate protein folding. The sequence is that of Chaperonin GroEL from Methylocella silvestris (strain DSM 15510 / CIP 108128 / LMG 27833 / NCIMB 13906 / BL2).